A 377-amino-acid chain; its full sequence is Flagellin D (377 aa).

Coiled-coil stretches lie at residues 103–129 (SNSKSERVAIQEEITALNDELNRIAET) and 310–339 (AFQNRFNHAISNLDNINENVNASKSRIKDT).

This sequence belongs to the bacterial flagellin family. As to quaternary structure, heteromer of multiple flagellin subunits including FlaA, FlaB, FlaC, FlaD and FlaE.

The protein resides in the secreted. It is found in the bacterial flagellum. Flagellin is the subunit protein which polymerizes to form the filaments of bacterial flagella. FlaD is not essential for flagellar synthesis and motility. The protein is Flagellin D (flaD) of Vibrio cholerae serotype O1 (strain ATCC 39315 / El Tor Inaba N16961).